Reading from the N-terminus, the 1081-residue chain is Mediator of RNA polymerase II transcription subunit 15 (1081 aa).

The residue at position 2 (Ser2) is an N-acetylserine. The tract at residues 25–49 (LQVLMDINTLNGGSSDTADKIRIHA) is interaction with GCN4. The disordered stretch occupies residues 238 to 286 (QAQAQANNNNNGLPQNGNINNNINIPQQQQMQPPNSSANNNPLQQQSSQ). Residue Ser335 is modified to Phosphoserine. A run of 11 repeats spans residues 422 to 423 (QA), 424 to 425 (QA), 426 to 427 (QA), 428 to 429 (QA), 430 to 431 (QA), 432 to 433 (QA), 434 to 435 (QA), 436 to 437 (QA), 438 to 439 (QA), 440 to 441 (QA), and 442 to 443 (QA). Residues 422-481 (QAQAQAQAQAQAQAQAQAQAQAAQAAQAQAQAQAQAQAQAQAQAQAQAQAQAQAQAQAQA) form a 30 X 2 AA approximate tandem repeats of Q-A region. A 12; approximate repeat occupies 444-445 (AQ). The stretch at 446 to 447 (AA) is one 13; approximate repeat. 17 tandem repeats follow at residues 448–449 (QA), 450–451 (QA), 452–453 (QA), 454–455 (QA), 456–457 (QA), 458–459 (QA), 460–461 (QA), 462–463 (QA), 464–465 (QA), 466–467 (QA), 468–469 (QA), 470–471 (QA), 472–473 (QA), 474–475 (QA), 476–477 (QA), 478–479 (QA), and 480–481 (QA). The segment covering 476 to 497 (QAQAQAHAQHQPSQQPQQAQQQ) has biased composition (low complexity). 2 disordered regions span residues 476–505 (QAQA…HGLT) and 692–712 (QQQQ…YSAM). 5 positions are modified to phosphoserine: Ser736, Ser752, Ser783, Ser785, and Ser789. The tract at residues 744–836 (PVSAAATPSL…KTVQSPMGAQ (93 aa)) is disordered. Positions 749–836 (ATPSLNKTIN…KTVQSPMGAQ (88 aa)) are enriched in polar residues. Thr793 is modified (phosphothreonine). Phosphoserine is present on residues Ser831, Ser1003, Ser1008, Ser1018, and Ser1034. A disordered region spans residues 1026–1055 (DSKKIKVDSPDDPFMTKSGATTSEKQEVTN).

The protein belongs to the Mediator complex subunit 15 family. Component of the Mediator complex, which is composed of at least 21 subunits that form three structurally distinct submodules. The Mediator head module contains MED6, MED8, MED11, SRB4/MED17, SRB5/MED18, ROX3/MED19, SRB2/MED20 and SRB6/MED22, the middle module contains MED1, MED4, NUT1/MED5, MED7, CSE2/MED9, NUT2/MED10, SRB7/MED21 and SOH1/MED31, and the tail module contains MED2, PGD1/MED3, RGR1/MED14, GAL11/MED15 and SIN4/MED16. The head and the middle modules interact directly with RNA polymerase II, whereas the elongated tail module interacts with gene-specific regulatory proteins. GAL11/MED15 interacts with the activator GAL4; the interaction is direct. GAL11/MED15 interacts (via multiple regions) with the activator GCN4; the interaction is direct.

Its subcellular location is the nucleus. Its function is as follows. Component of the Mediator complex, a coactivator involved in the regulated transcription of nearly all RNA polymerase II-dependent genes. Mediator functions as a bridge to convey information from gene-specific regulatory proteins to the basal RNA polymerase II transcription machinery. The Mediator complex, having a compact conformation in its free form, is recruited to promoters by direct interactions with regulatory proteins and serves for the assembly of a functional pre-initiation complex with RNA polymerase II and the general transcription factors. The Mediator complex unfolds to an extended conformation and partially surrounds RNA polymerase II, specifically interacting with the unphosphorylated form of the C-terminal domain (CTD) of RNA polymerase II. The Mediator complex dissociates from the RNA polymerase II holoenzyme and stays at the promoter when transcriptional elongation begins. It has an important role in the negative regulation of Ty transcription. In Saccharomyces cerevisiae (strain ATCC 204508 / S288c) (Baker's yeast), this protein is Mediator of RNA polymerase II transcription subunit 15.